The chain runs to 492 residues: Beta-Ala-His dipeptidase (492 aa).

His107 is a Zn(2+) binding site. Asp109 is an active-site residue. Position 140 (Asp140) interacts with Zn(2+). Glu174 (proton acceptor) is an active-site residue. Zn(2+) is bound at residue Glu175. Ser194 is subject to Phosphoserine. Zn(2+)-binding residues include Asp203 and His453.

The protein belongs to the peptidase M20A family. Homodimer. Requires Zn(2+) as cofactor. Detected exclusively in kidney.

The protein resides in the secreted. It catalyses the reaction Preferential hydrolysis of the beta-Ala-|-His dipeptide (carnosine), and also anserine, Xaa-|-His dipeptides and other dipeptides including homocarnosine.. The enzyme catalyses carnosine + H2O = beta-alanine + L-histidine. The catalysed reaction is anserine + H2O = N(pros)-methyl-L-histidine + beta-alanine. It carries out the reaction L-alanyl-L-histidine + H2O = L-histidine + L-alanine. It catalyses the reaction glycyl-L-histidine + H2O = L-histidine + glycine. The enzyme catalyses L-homocarnosine + H2O = 4-aminobutanoate + L-histidine. Its function is as follows. Catalyzes the peptide bond hydrolysis in Xaa-His dipeptides, displaying the highest activity toward carnosine (beta-alanyl-L-histidine) and anserine (beta-alanyl-3-methyl-histidine). The polypeptide is Beta-Ala-His dipeptidase (Cndp1) (Mus musculus (Mouse)).